Reading from the N-terminus, the 629-residue chain is Dolichyl-diphosphooligosaccharide--protein glycosyltransferase subunit 2 (629 aa).

A signal peptide spans 1 to 22 (MAPPGSRTVLLLALTIIARTQA). Over 23-541 (LKPTHYLTKH…RDPEKRPPTV (519 aa)) the chain is Lumenal. The N-linked (GlcNAc...) asparagine glycan is linked to N106. K154 is covalently cross-linked (Glycyl lysine isopeptide (Lys-Gly) (interchain with G-Cter in ubiquitin)). A helical membrane pass occupies residues 542–562 (VSNTFTGLILSPLLLLFALWI). At 563 to 570 (RIGAKISN) the chain is on the cytoplasmic side. Residues 571–591 (FTFGLTIIFHLGHAMLAMYVY) traverse the membrane as a helical segment. Residues 592–594 (WTQ) lie on the Lumenal side of the membrane. The chain crosses the membrane as a helical span at residues 595 to 615 (LNMFQTLKYLAILGSVTFLAG). Topologically, residues 616–629 (NRMLAQQAIKRTAH) are cytoplasmic.

It belongs to the SWP1 family. Component of the oligosaccharyltransferase (OST) complex. OST exists in two different complex forms which contain common core subunits RPN1, RPN2, OST48, OST4, DAD1 and TMEM258, either STT3A or STT3B as catalytic subunits, and form-specific accessory subunits. STT3A complex assembly occurs through the formation of 3 subcomplexes. Subcomplex 1 contains RPN1 and TMEM258, subcomplex 2 contains the STT3A-specific subunits STT3A, DC2/OSTC, and KCP2 as well as the core subunit OST4, and subcomplex 3 contains RPN2, DAD1, and OST48. The STT3A complex can form stable complexes with the Sec61 complex or with both the Sec61 and TRAP complexes. Interacts with DDI2. Interacts with TMEM35A/NACHO.

Its subcellular location is the endoplasmic reticulum. It is found in the endoplasmic reticulum membrane. It participates in protein modification; protein glycosylation. In terms of biological role, subunit of the oligosaccharyl transferase (OST) complex that catalyzes the initial transfer of a defined glycan (Glc(3)Man(9)GlcNAc(2) in eukaryotes) from the lipid carrier dolichol-pyrophosphate to an asparagine residue within an Asn-X-Ser/Thr consensus motif in nascent polypeptide chains, the first step in protein N-glycosylation. N-glycosylation occurs cotranslationally and the complex associates with the Sec61 complex at the channel-forming translocon complex that mediates protein translocation across the endoplasmic reticulum (ER). All subunits are required for a maximal enzyme activity. The chain is Dolichyl-diphosphooligosaccharide--protein glycosyltransferase subunit 2 from Sus scrofa (Pig).